The following is a 259-amino-acid chain: Acyl-[acyl-carrier-protein]--UDP-N-acetylglucosamine O-acyltransferase (259 aa).

It belongs to the transferase hexapeptide repeat family. LpxA subfamily. As to quaternary structure, homotrimer.

Its subcellular location is the cytoplasm. It carries out the reaction a (3R)-hydroxyacyl-[ACP] + UDP-N-acetyl-alpha-D-glucosamine = a UDP-3-O-[(3R)-3-hydroxyacyl]-N-acetyl-alpha-D-glucosamine + holo-[ACP]. Its pathway is glycolipid biosynthesis; lipid IV(A) biosynthesis; lipid IV(A) from (3R)-3-hydroxytetradecanoyl-[acyl-carrier-protein] and UDP-N-acetyl-alpha-D-glucosamine: step 1/6. In terms of biological role, involved in the biosynthesis of lipid A, a phosphorylated glycolipid that anchors the lipopolysaccharide to the outer membrane of the cell. This chain is Acyl-[acyl-carrier-protein]--UDP-N-acetylglucosamine O-acyltransferase, found in Akkermansia muciniphila (strain ATCC BAA-835 / DSM 22959 / JCM 33894 / BCRC 81048 / CCUG 64013 / CIP 107961 / Muc).